Consider the following 490-residue polypeptide: Cytochrome P450 2C12, female-specific (490 aa).

Heme is bound at residue C435.

The protein belongs to the cytochrome P450 family. The cofactor is heme.

The protein resides in the endoplasmic reticulum membrane. It localises to the microsome membrane. The catalysed reaction is an organic molecule + reduced [NADPH--hemoprotein reductase] + O2 = an alcohol + oxidized [NADPH--hemoprotein reductase] + H2O + H(+). This P450 is active in 15-beta-hydroxylation of steroid sulfates. In Rattus norvegicus (Rat), this protein is Cytochrome P450 2C12, female-specific (Cyp2c12).